A 545-amino-acid chain; its full sequence is Probable sucrose-6-phosphate hydrolase (545 aa).

Residues leucine 107–aspartate 110, glutamine 126, phenylalanine 169–serine 170, arginine 230–aspartate 231, and glutamate 285 each bind substrate. Aspartate 110 is an active-site residue.

It belongs to the glycosyl hydrolase 32 family.

The protein resides in the cytoplasm. The catalysed reaction is Hydrolysis of terminal non-reducing beta-D-fructofuranoside residues in beta-D-fructofuranosides.. Its pathway is glycan biosynthesis; sucrose metabolism. Enables the bacterium to metabolize sucrose as a sole carbon source. This is Probable sucrose-6-phosphate hydrolase from Psychromonas ingrahamii (strain DSM 17664 / CCUG 51855 / 37).